The primary structure comprises 206 residues: Flavin reductase (NADPH) (206 aa).

NADP(+)-binding residues include Gly10, Thr12, Gly13, Asn14, Thr15, Arg35, Ser38, and Arg39. Ser42 bears the Phosphoserine mark. Residues Asp54, Val55, Leu75, Gly76, and Arg78 each coordinate NADP(+). Position 82 is a phosphoserine (Ser82). Positions 87, 109, 132, 153, and 154 each coordinate NADP(+). Cys109 (S-nitroso-cysteine intermediate; for S-nitroso-CoA-dependent nitrosyltransferase activity) is an active-site residue. Residue Cys188 is the S-nitroso-cysteine intermediate; for S-nitroso-CoA-dependent nitrosyltransferase activity of the active site.

Monomer. As to expression, at least expressed in the liver and erythrocyte.

It is found in the cytoplasm. It carries out the reaction reduced riboflavin + NADP(+) = riboflavin + NADPH + 2 H(+). It catalyses the reaction bilirubin IXbeta + NADP(+) = biliverdin IXbeta + NADPH + H(+). The enzyme catalyses FMNH2 + NAD(+) = FMN + NADH + 2 H(+). The catalysed reaction is FMNH2 + NADP(+) = FMN + NADPH + 2 H(+). It carries out the reaction S-nitroso-CoA + L-cysteinyl-[protein] = S-nitroso-L-cysteinyl-[protein] + CoA. It catalyses the reaction L-cysteinyl-[SCAN] + S-nitroso-CoA = S-nitroso-L-cysteinyl-[SCAN] + CoA. The enzyme catalyses S-nitroso-L-cysteinyl-[SCAN] + L-cysteinyl-[protein] = L-cysteinyl-[SCAN] + S-nitroso-L-cysteinyl-[protein]. Its function is as follows. Enzyme that can both act as a NAD(P)H-dependent reductase and a S-nitroso-CoA-dependent nitrosyltransferase. Promotes fetal heme degradation during development. Also expressed in adult tissues, where it acts as a regulator of hematopoiesis, intermediary metabolism (glutaminolysis, glycolysis, TCA cycle and pentose phosphate pathway) and insulin signaling. Has a broad specificity oxidoreductase activity by catalyzing the NAD(P)H-dependent reduction of a variety of flavins, such as riboflavin, FAD or FMN, biliverdins, methemoglobin and PQQ (pyrroloquinoline quinone). Contributes to fetal heme catabolism by catalyzing reduction of biliverdin IXbeta into bilirubin IXbeta in the liver. Biliverdin IXbeta, which constitutes the major heme catabolite in the fetus is not present in adult. Does not reduce bilirubin IXalpha. Can also reduce the complexed Fe(3+) iron to Fe(2+) in the presence of FMN and NADPH. Acts as a protein nitrosyltransferase by catalyzing nitrosylation of cysteine residues of target proteins, such as HMOX2, INSR and IRS1. S-nitroso-CoA-dependent nitrosyltransferase activity is mediated via a 'ping-pong' mechanism: BLVRB first associates with both S-nitroso-CoA and protein substrate, nitric oxide group is then transferred from S-nitroso-CoA to Cys-109 and Cys-188 residues of BLVRB and from S-nitroso-BLVRB to the protein substrate. Inhibits insulin signaling by mediating nitrosylation of INSR and IRS1, leading to their inhibition. This is Flavin reductase (NADPH) (BLVRB) from Bos taurus (Bovine).